Here is a 217-residue protein sequence, read N- to C-terminus: GRB2-related adapter protein (217 aa).

Residues 1–58 form the SH3 1 domain; it reads MESVALYSFQATESDELAFNKGDTLKILNMEDDQNWYKAELRGVEGFIPKNYIRVKPH. The SH2 domain occupies 60–154; it reads WYSGRISRQL…QIFLRDEEPL (95 aa). One can recognise an SH3 2 domain in the interval 158–217; the sequence is PGACFAQAQFDFSAQDPSQLSFRRGDIIEVLERPDPHWWRGRSCGRVGFFPRSYVQPVHL.

The protein belongs to the GRB2/sem-5/DRK family. In terms of assembly, associates through its SH2 domain with ligand-activated receptors for stem cell factor (KIT) and erythropoietin (EPOR). Also forms a stable complex with the Bcr-Abl oncoprotein. GRAP is associated with the Ras guanine nucleotide exchange factor SOS1, primarily through its N-terminal SH3 domain. Interacts with phosphorylated LAT upon TCR activation. Interacts with SHB.

It is found in the membrane. Its subcellular location is the synapse. Functionally, couples signals from receptor and cytoplasmic tyrosine kinases to the Ras signaling pathway. Plays a role in the inner ear and in hearing. This is GRB2-related adapter protein from Homo sapiens (Human).